The following is a 170-amino-acid chain: Heat shock protein beta-7 (170 aa).

Residues 1-39 (MSHRTSSTFRAERSFHSSSSSSSSSTSSSASRALPAQDP) are disordered. The required for localization to SC35 splicing speckles stretch occupies residues 1-71 (MSHRTSSTFR…PLAFPARPGG (71 aa)). Positions 16 to 31 (HSSSSSSSSSTSSSAS) are enriched in low complexity. Residues 62 to 170 (PLAFPARPGG…QQTFRTEIKI (109 aa)) form the sHSP domain.

The protein belongs to the small heat shock protein (HSP20) family. In terms of assembly, interacts with C-terminal domain of actin-binding protein 280. As to expression, isoform 1 is highly expressed in adult and fetal heart, skeletal muscle, and at a much lower levels in adipose tissue and in aorta. Undetectable in other tissues. Isoform 2 and isoform 3 are poorly detected in heart.

It is found in the cytoplasm. The protein localises to the nucleus. Its subcellular location is the cajal body. The polypeptide is Heat shock protein beta-7 (HSPB7) (Homo sapiens (Human)).